A 308-amino-acid chain; its full sequence is Taste receptor type 2 member 41 (308 aa).

The Extracellular portion of the chain corresponds to 1–6 (MLSTVS). The helical transmembrane segment at 7 to 27 (VFFMSIFVLLCFLGILANGFI) threads the bilayer. Over 28 to 60 (VLMLSREWLWRGRLLPSDMILLSLGTSRFCQQC) the chain is Cytoplasmic. A helical membrane pass occupies residues 61–81 (VGLVNSFYYSLHLVEYSRSLA). Topologically, residues 82–90 (RQLISLHMD) are extracellular. Residues 91–111 (FLNSATFWFGTWLSVLFCIKI) traverse the membrane as a helical segment. The Cytoplasmic portion of the chain corresponds to 112-128 (ANFSHPAFLWLKWRFPA). A helical membrane pass occupies residues 129–149 (LVPWLLLGSILVSFIVTLMFF). The Extracellular segment spans residues 150-184 (WGNHTVYQAFLRRKFSGNTTFKEWNRRLEIDYFMP). Residues Asn152 and Asn167 are each glycosylated (N-linked (GlcNAc...) asparagine). Residues 185–205 (LKLVTTSIPCSLFLVSILLLI) traverse the membrane as a helical segment. The Cytoplasmic segment spans residues 206–239 (NSLRRHSQRMQHNAHSLQDPNTQAHSRALKSLIS). The chain crosses the membrane as a helical span at residues 240–260 (FLVLYALSYVSMVIDATVVIS). The Extracellular portion of the chain corresponds to 261–264 (SDNV). Residues 265 to 285 (WYWPWQIILYLCMSVHPFILI) traverse the membrane as a helical segment. The Cytoplasmic portion of the chain corresponds to 286-308 (TNNLKFRGTFRQLLLLARGFWVT).

The protein belongs to the G-protein coupled receptor T2R family. As to expression, expressed in subsets of taste receptor cells of the tongue and palate epithelium and exclusively in gustducin-positive cells. Expressed in 15% taste bud cells in circumvallate and foliate papillae but only in 2% in fungiform papillae. Expressed in the duodenum, antrum and fundus (part of the stomach).

The protein localises to the membrane. Its function is as follows. Receptor that may play a role in the perception of bitterness and is gustducin-linked. May play a role in sensing the chemical composition of the gastrointestinal content. The activity of this receptor may stimulate alpha gustducin, mediate PLC-beta-2 activation and lead to the gating of TRPM5. The polypeptide is Taste receptor type 2 member 41 (Tas2r41) (Rattus norvegicus (Rat)).